A 1240-amino-acid chain; its full sequence is Serine/threonine-protein kinase TAO2 (1240 aa).

The residue at position 9 (serine 9) is a Phosphoserine. The region spanning 28–281 is the Protein kinase domain; the sequence is FSDLREIGHG…SEVLLKHRFV (254 aa). ATP is bound by residues 34–42 and lysine 57; that span reads IGHGSFGAV. The active-site Proton acceptor is aspartate 151. Position 181 is a phosphoserine (serine 181). The disordered stretch occupies residues 320–463; the sequence is APNGPGAEAP…PTSTSSSARR (144 aa). The span at 356–380 shows a compositional bias: low complexity; the sequence is SSHSVPSMSISASSQSSSVNSLADA. The segment covering 381 to 401 has biased composition (acidic residues); the sequence is SDNEEEEEEEEEEEEEEEEEG. Residues 402–417 are compositionally biased toward basic and acidic residues; it reads PESREMAMMQEGEHTV. The residue at position 422 (serine 422) is a Phosphoserine. 2 coiled-coil regions span residues 493–528 and 581–608; these read SALR…EEHS and KELA…LQEN. At serine 663 the chain carries Phosphoserine. The stretch at 688–720 forms a coiled coil; it reads LRQHEATRELELRQLQAVQRTRAELTRLQHQTE. A phosphoserine mark is found at serine 782, serine 830, and serine 832. The stretch at 805-934 forms a coiled coil; that stretch reads RILGKEGTTL…GDGCPSPDIP (130 aa). Residues 899 to 946 form a disordered region; the sequence is VLTPVPEEEEEEEEEGGAPIGTHRDPGDGCPSPDIPPEPPPSHLRQYP. Over residues 904 to 914 the composition is skewed to acidic residues; the sequence is PEEEEEEEEEG. Positions 931–940 are enriched in pro residues; that stretch reads PDIPPEPPPS. Transmembrane regions (helical) follow at residues 972-992, 994-1014, 1019-1039, 1045-1065, and 1175-1195; these read LLPL…GGGL, AALL…LFLC, LPPG…VLSL, LMGV…SLAL, and LASC…LLKG. Leucine 999 carries the post-translational modification Omega-N-methylarginine. Phosphoserine is present on leucine 1037. A disordered region spans residues 1212–1240; it reads LGLSASRQLPPGTVAGRRSQTRRTLPPWR.

This sequence belongs to the protein kinase superfamily. STE Ser/Thr protein kinase family. STE20 subfamily. Interacts with MAP2K3 and MAP2K6. Self-associates. Interacts with tubulins. Interacts with MAP3K7 and interferes with MAP3K7-binding to CHUK and thus prevents NF-kappa-B activation. Isoform 2 interacts with PCDH8; this complex may also include CDH2. The cofactor is Mg(2+). Post-translationally, autophosphorylated. Phosphorylated by ATM. In terms of processing, phosphorylated on Ser-1037 by MAPK14. This phosphorylation is required PCDH8 for endocytosis.

The protein resides in the cytoplasmic vesicle membrane. Its subcellular location is the cytoplasm. It localises to the cytoskeleton. The protein localises to the cell projection. It is found in the dendrite. It carries out the reaction L-seryl-[protein] + ATP = O-phospho-L-seryl-[protein] + ADP + H(+). The catalysed reaction is L-threonyl-[protein] + ATP = O-phospho-L-threonyl-[protein] + ADP + H(+). In terms of biological role, serine/threonine-protein kinase involved in different processes such as membrane blebbing and apoptotic bodies formation DNA damage response and MAPK14/p38 MAPK stress-activated MAPK cascade. Phosphorylates itself, MBP, activated MAPK8, MAP2K3, MAP2K6 and tubulins. Activates the MAPK14/p38 MAPK signaling pathway through the specific activation and phosphorylation of the upstream MAP2K3 and MAP2K6 kinases. In response to DNA damage, involved in the G2/M transition DNA damage checkpoint by activating the p38/MAPK14 stress-activated MAPK cascade, probably by mediating phosphorylation of upstream MAP2K3 and MAP2K6 kinases. May affect microtubule organization and stability. May play a role in the osmotic stress-MAPK8 pathway. Prevents MAP3K7-mediated activation of CHUK, and thus NF-kappa-B activation. Isoform 2, but not isoform 1, is required for PCDH8 endocytosis. Following homophilic interactions between PCDH8 extracellular domains, isoform 2 phosphorylates and activates MAPK14/p38 MAPK which in turn phosphorylates isoform 2. This process leads to PCDH8 endocytosis and CDH2 cointernalization. Both isoforms are involved in MAPK14/p38 MAPK activation. The sequence is that of Serine/threonine-protein kinase TAO2 (Taok2) from Mus musculus (Mouse).